A 393-amino-acid polypeptide reads, in one-letter code: Arginine biosynthesis bifunctional protein ArgJ 3 (393 aa).

Substrate-binding residues include threonine 148, lysine 170, threonine 181, glutamate 260, asparagine 388, and threonine 393. The active-site Nucleophile is threonine 181.

It belongs to the ArgJ family. As to quaternary structure, heterotetramer of two alpha and two beta chains.

Its subcellular location is the cytoplasm. It catalyses the reaction N(2)-acetyl-L-ornithine + L-glutamate = N-acetyl-L-glutamate + L-ornithine. The catalysed reaction is L-glutamate + acetyl-CoA = N-acetyl-L-glutamate + CoA + H(+). Its pathway is amino-acid biosynthesis; L-arginine biosynthesis; L-ornithine and N-acetyl-L-glutamate from L-glutamate and N(2)-acetyl-L-ornithine (cyclic): step 1/1. It participates in amino-acid biosynthesis; L-arginine biosynthesis; N(2)-acetyl-L-ornithine from L-glutamate: step 1/4. Catalyzes two activities which are involved in the cyclic version of arginine biosynthesis: the synthesis of N-acetylglutamate from glutamate and acetyl-CoA as the acetyl donor, and of ornithine by transacetylation between N(2)-acetylornithine and glutamate. In Streptomyces clavuligerus, this protein is Arginine biosynthesis bifunctional protein ArgJ 3.